We begin with the raw amino-acid sequence, 354 residues long: MRFDLEPPSSVAAAHRTGVLLINLGTPDAPTPRAVRRYLAEFLSDPRVVEIPQVVWQVLLRTLILPLRGRASAKKYAAVWMPEGSPLRVYTERQTEGVRHLLASNAYQVTVDYAMRYGSPNIAQALAQFKRAGVERVLLMPMYPQYSASTTATAFDAAFAALARMRNQPEVRTVRQYADHPAYIHALAEQVRQYWAQHGRPDFAAGDKLVLSFHGVPKRTLDLGDPYHDQCQQTGALLMAALGLSTLECRVTFQSRFGKAEWLQPYTAPTLRELGAAGVRRADVFCPGFTADCLETIEEIGMEVRDEFIAGGGQAFHRIPCLNGAHAWIGALGEIVAENLQGWPVKAAQPEMVN.

Positions 214 and 295 each coordinate Fe cation.

It belongs to the ferrochelatase family.

It is found in the cytoplasm. It carries out the reaction heme b + 2 H(+) = protoporphyrin IX + Fe(2+). The protein operates within porphyrin-containing compound metabolism; protoheme biosynthesis; protoheme from protoporphyrin-IX: step 1/1. Its function is as follows. Catalyzes the ferrous insertion into protoporphyrin IX. This Burkholderia ambifaria (strain MC40-6) protein is Ferrochelatase.